Here is a 537-residue protein sequence, read N- to C-terminus: tRNA(His) guanylyltransferase 2 (537 aa).

Aspartate 307, glycine 308, and aspartate 354 together coordinate Mg(2+). GTP contacts are provided by residues 307-312 and 353-354; these read DGCHFH and SD.

The protein belongs to the tRNA(His) guanylyltransferase family. The cofactor is Mg(2+).

It is found in the nucleus. The protein localises to the nucleoplasm. It carries out the reaction a 5'-end ribonucleotide-tRNA(His) + GTP + ATP + H2O = a 5'-end phospho-guanosine-ribonucleotide-tRNA(His) + AMP + 2 diphosphate + H(+). Functionally, adds a GMP to the 5'-end of tRNA(His) after transcription and RNase P cleavage. The sequence is that of tRNA(His) guanylyltransferase 2 (THG2) from Arabidopsis thaliana (Mouse-ear cress).